A 221-amino-acid chain; its full sequence is Fructokinase (221 aa).

The protein belongs to the carbohydrate kinase PfkB family.

The enzyme catalyses D-fructose + ATP = D-fructose 6-phosphate + ADP + H(+). The chain is Fructokinase (scrK) from Salmonella thompson.